Consider the following 220-residue polypeptide: Iron-sulfur cluster repair protein YtfE (220 aa).

It belongs to the RIC family. YtfE subfamily. As to quaternary structure, homodimer.

It localises to the cytoplasm. Functionally, di-iron-containing protein involved in the repair of iron-sulfur clusters damaged by oxidative and nitrosative stress conditions. The sequence is that of Iron-sulfur cluster repair protein YtfE from Escherichia coli O157:H7.